The chain runs to 266 residues: MTLIENLNSDKTFLENNQYTDEGVKVYEFIFGENYISSGGLEATKKILSDIELNENSKVLDIGSGLGGGCMYINEKYGAHTHGIDICSNIVNMANERVSGNNKIIFEANDILTKEFPENNFDLIYSRDAILHLSLENKNKLFQKCYKWLKPTGTLLITDYCATEKENWDDEFKEYVKQRKYTLITVEEYADILTACNFKNVVSKDLSDYWNQLLEVEHKYLHENKEEFLKLFSEKKFISLDDGWSRKIKDSKRKMQRWGYFKATKN.

Q18 is a binding site for phosphoethanolamine. Y19 is a catalytic residue. Y27 is a phosphoethanolamine binding site. The S-adenosyl-L-methionine site is built by I36, S37, G63, D85, I86, D110, I111, and R127. H132 is a catalytic residue. Phosphoethanolamine is bound by residues Y160, Y175, R179, Y181, and K247.

The protein belongs to the class I-like SAM-binding methyltransferase superfamily. PEAMT family. Monomer.

It is found in the golgi apparatus membrane. Its subcellular location is the cytoplasm. The enzyme catalyses phosphoethanolamine + S-adenosyl-L-methionine = N-methylethanolamine phosphate + S-adenosyl-L-homocysteine + H(+). It carries out the reaction N-methylethanolamine phosphate + S-adenosyl-L-methionine = N,N-dimethylethanolamine phosphate + S-adenosyl-L-homocysteine + H(+). It catalyses the reaction N,N-dimethylethanolamine phosphate + S-adenosyl-L-methionine = phosphocholine + S-adenosyl-L-homocysteine + H(+). It functions in the pathway phospholipid metabolism; phosphatidylcholine biosynthesis; phosphocholine from phosphoethanolamine. Inhibited by phosphocholine. Inhibited by hexadecylphosphocholine (miltefosine). Inhibited by S-adenosyl-l-homocysteine. Weakly inhibited in vitro by amodiaquine, chloroquine and primaquine. Inhibited by NSC-158011. Its function is as follows. Catalyzes N-methylation of phosphoethanolamine, phosphomonomethylethanolamine and phosphodimethylethanolamine, the three methylation steps required to convert phosphoethanolamine to phosphocholine. Has no ethanolamine- or phosphatidylethanolamine-N-methyltransferase activity. Required for gametocyte development, maturation and transmission to mosquitoes and for oocyst formation in the mosquito midgut. In Plasmodium falciparum (isolate 3D7), this protein is Phosphoethanolamine N-methyltransferase.